Consider the following 479-residue polypeptide: Ribosomal RNA small subunit methyltransferase F (479 aa).

S-adenosyl-L-methionine contacts are provided by residues 125-131, Glu-149, Asp-176, and Asp-194; that span reads AAAPGSK. Cys-247 functions as the Nucleophile in the catalytic mechanism.

It belongs to the class I-like SAM-binding methyltransferase superfamily. RsmB/NOP family.

Its subcellular location is the cytoplasm. The catalysed reaction is cytidine(1407) in 16S rRNA + S-adenosyl-L-methionine = 5-methylcytidine(1407) in 16S rRNA + S-adenosyl-L-homocysteine + H(+). In terms of biological role, specifically methylates the cytosine at position 1407 (m5C1407) of 16S rRNA. The chain is Ribosomal RNA small subunit methyltransferase F from Salmonella newport (strain SL254).